The following is a 239-amino-acid chain: Ubiquinone biosynthesis O-methyltransferase (239 aa).

4 residues coordinate S-adenosyl-L-methionine: arginine 44, glycine 63, aspartate 84, and methionine 128.

Belongs to the methyltransferase superfamily. UbiG/COQ3 family.

The enzyme catalyses a 3-demethylubiquinol + S-adenosyl-L-methionine = a ubiquinol + S-adenosyl-L-homocysteine + H(+). The catalysed reaction is a 3-(all-trans-polyprenyl)benzene-1,2-diol + S-adenosyl-L-methionine = a 2-methoxy-6-(all-trans-polyprenyl)phenol + S-adenosyl-L-homocysteine + H(+). The protein operates within cofactor biosynthesis; ubiquinone biosynthesis. Its function is as follows. O-methyltransferase that catalyzes the 2 O-methylation steps in the ubiquinone biosynthetic pathway. This Xanthomonas oryzae pv. oryzae (strain MAFF 311018) protein is Ubiquinone biosynthesis O-methyltransferase.